The following is a 494-amino-acid chain: MHQSSWKSRRHRRRGHRHSAWFRQHGSNERKDAGAQQSPQGSSDGHGEAPSTSSTAGSSSVPDLPGYYFDPEKKRYFRLLPGHNNCNPLTKESIRQKEMERKRLRLLEEEEQQGKKIARLGFNASSLLQKSKLGFLNATSYCRLAHELQVSCMQRKKVQIQSSDPSALASDQFNLIMADTNSDRLFTVNDVKVGGSKYGIISLHGLKTPTFRVHMHENLYFTNRKVNAMCWASLNHLDSHVLLCLMGIAETPGCATLLPTSLFVSNHAAGDRPGMLCSFRIPGAWSCAWSLNIQANNCFSTGLSRRVLVTSVVTGHRQSFGTSSDVLTQQFAVTAPLLFNGCRSGEIFAIDLRCQNQGKGWKATCLFHDSAVTSVQILQEEQCLMASDMAGTIKLWDLRTTKCIRQYEGHVNEYAHLPLHVHEEEGIMVAVGQDCYTRIWSLHDGQLLRTIPSPYPTSKADIPSVAFSSRLGGARGAPGLLMAVRQDLYCFSYS.

The tract at residues 1-65 is disordered; it reads MHQSSWKSRR…AGSSSVPDLP (65 aa). Basic residues predominate over residues 7–20; the sequence is KSRRHRRRGHRHSA. A compositionally biased stretch (low complexity) spans 51-60; the sequence is STSSTAGSSS. WD repeat units follow at residues 367–406 and 409–450; these read FHDS…CIRQ and GHVN…LLRT.

In terms of assembly, interacts with DDB1 and CUL4A.

It functions in the pathway protein modification; protein ubiquitination. Its function is as follows. May function as a substrate receptor for CUL4-DDB1 E3 ubiquitin-protein ligase complex. The protein is DDB1- and CUL4-associated factor 4 (DCAF4) of Bos taurus (Bovine).